Here is a 738-residue protein sequence, read N- to C-terminus: Ribosomal RNA large subunit methyltransferase K/L (738 aa).

One can recognise a THUMP domain in the interval 46 to 157 (TAYRVCLWSR…ADQAVIGLDL (112 aa)).

Belongs to the methyltransferase superfamily. RlmKL family.

The protein resides in the cytoplasm. It carries out the reaction guanosine(2445) in 23S rRNA + S-adenosyl-L-methionine = N(2)-methylguanosine(2445) in 23S rRNA + S-adenosyl-L-homocysteine + H(+). The enzyme catalyses guanosine(2069) in 23S rRNA + S-adenosyl-L-methionine = N(2)-methylguanosine(2069) in 23S rRNA + S-adenosyl-L-homocysteine + H(+). Functionally, specifically methylates the guanine in position 2445 (m2G2445) and the guanine in position 2069 (m7G2069) of 23S rRNA. This chain is Ribosomal RNA large subunit methyltransferase K/L, found in Methylococcus capsulatus (strain ATCC 33009 / NCIMB 11132 / Bath).